A 580-amino-acid chain; its full sequence is Protein O-linked-mannose beta-1,4-N-acetylglucosaminyltransferase 2 (580 aa).

Over 1-4 (MHLS) the chain is Cytoplasmic. The chain crosses the membrane as a helical; Signal-anchor for type II membrane protein span at residues 5 to 25 (AVLNALLVSVLAAVLWKHVRL). The Lumenal segment spans residues 26–580 (REHAAALEEE…PFADVLVCNT (555 aa)). Asn99 and Asn276 each carry an N-linked (GlcNAc...) asparagine glycan. Positions 488–580 (ARCQASVQGA…PFADVLVCNT (93 aa)) constitute a Fibronectin type-III domain.

It belongs to the glycosyltransferase 61 family.

The protein resides in the endoplasmic reticulum membrane. The enzyme catalyses 3-O-(alpha-D-mannosyl)-L-threonyl-[protein] + UDP-N-acetyl-alpha-D-glucosamine = 3-O-(N-acetyl-beta-D-glucosaminyl-(1-&gt;4)-alpha-D-mannosyl)-L-threonyl-[protein] + UDP + H(+). The protein operates within protein modification; protein glycosylation. Its function is as follows. O-linked mannose beta-1,4-N-acetylglucosaminyltransferase that transfers UDP-N-acetyl-D-glucosamine to the 4-position of the mannose to generate N-acetyl-D-glucosamine-beta-1,4-O-D-mannosylprotein. Involved in the biosynthesis of the phosphorylated O-mannosyl trisaccharide (N-acetylgalactosamine-beta-3-N-acetylglucosamine-beta-4-(phosphate-6-)mannose), a carbohydrate structure present in alpha-dystroglycan (DAG1), which is required for binding laminin G-like domain-containing extracellular proteins with high affinity. The polypeptide is Protein O-linked-mannose beta-1,4-N-acetylglucosaminyltransferase 2 (POMGNT2) (Canis lupus familiaris (Dog)).